Consider the following 89-residue polypeptide: Small ribosomal subunit protein uS15c (89 aa).

The protein belongs to the universal ribosomal protein uS15 family. As to quaternary structure, part of the 30S ribosomal subunit.

The protein localises to the plastid. Its subcellular location is the organellar chromatophore. This Paulinella chromatophora protein is Small ribosomal subunit protein uS15c (rps15).